The chain runs to 467 residues: Mothers against decapentaplegic homolog 2 (467 aa).

Residue Ser-2 is modified to N-acetylserine. Thr-8 bears the Phosphothreonine mark. Residues Pro-10–Pro-176 form the MH1 domain. Lys-19 bears the N6-acetyllysine mark. The Zn(2+) site is built by Cys-74, Cys-149, Cys-161, and His-166. Residues Pro-207–Ile-217 are compositionally biased toward polar residues. The segment at Pro-207–Pro-251 is disordered. Thr-220 carries the post-translational modification Phosphothreonine. Residues Pro-221 to Tyr-225 carry the PY-motif motif. The span at Ser-233–Thr-243 shows a compositional bias: polar residues. Phosphoserine; by CAMK2 is present on Ser-240. A phosphoserine mark is found at Ser-245, Ser-250, Ser-255, Ser-458, Ser-460, and Ser-464. The 194-residue stretch at Trp-274–Ser-467 folds into the MH2 domain. Ser-465 and Ser-467 each carry phosphoserine; by TGFBR1.

Belongs to the dwarfin/SMAD family. Monomer; in the absence of TGF-beta. Heterodimer; in the presence of TGF-beta. Forms a heterodimer with co-SMAD, SMAD4, in the nucleus to form the transactivation complex SMAD2/SMAD4. Found in a complex with SMAD3 and TRIM33 upon addition of TGF-beta. Identified in a complex that contains at least ZNF451, SMAD2, SMAD3 and SMAD4. Interacts (via the MH2 domain) with ZFYVE9; may form trimers with the SMAD4 co-SMAD. Interacts with TAZ/WWRT1. Interacts with FOXH1. Interacts with SNW1. Interacts with CREB-binding protein (CBP) and EP300. Interacts with SNON. Interacts with ALK4/ACVR1B. Interacts with SKOR1. Interacts with SKOR2. Interacts with PRDM16. Interacts (via MH2 domain) with LEMD3. Interacts with RBPMS. Interacts with WWP1. Interacts (dephosphorylated form, via the MH1 and MH2 domains) with RANBP3 (via its C-terminal R domain); the interaction results in the export of dephosphorylated SMAD3 out of the nucleus and termination of the TGF-beta signaling. Interacts with PDPK1 (via PH domain). Interacts with DAB2; the interactions are enhanced upon TGF-beta stimulation. Interacts with USP15. Interacts with PPP5C. Interacts with LDLRAD4 (via the SMAD interaction motif). Interacts (via MH2 domain) with PMEPA1 (via the SMAD interaction motif). Interacts with ZFHX3. Interacts with ZNF451. Interacts with SMURF2 when phosphorylated on Ser-465/467. Interacts with PPM1A. Interacts with TGF-beta. Interacts with TGFBR1. Interacts with TGIF. Interacts with SMAD3 and TRIM33. Interacts with ZNF580. Interacts with NEDD4L in response to TGF-beta. Interacts with HGS. Interacts with AIP1. Interacts with WWP1. Interacts with PML. Interacts weakly with ZNF8. Interacts (when phosphorylated) with RNF111; RNF111 acts as an enhancer of the transcriptional responses by mediating ubiquitination and degradation of SMAD2 inhibitors. Interacts with YAP1 (when phosphorylated at 'Ser-112'). Interacts when phosphorylated with IPO7; the interaction facilitates translocation of SMAD2 to the nucleus. Interacts with MTMR4; negatively regulates TGF-beta signaling through SMAD2 dephosphorylation and retention in endosomes. Post-translationally, in response to TGF-beta, phosphorylated on the C-terminal SXS motif by TGF-beta and activin type 1 receptor kinases, phosphorylation declines progressively in a KMT5A-dependent manner. Phosphorylation in this motif is required for interaction with a number of proteins including SMURF2, SNON and SMAD4 in response to TGF-beta. Dephosphorylated in this motif by PPM1A leading to disruption of the SMAD2/3-SMAD4 complex, nuclear export and termination of the TGF-beta signaling. In response to decorin, the naturally occurring inhibitor of TGF-beta signaling, phosphorylated on Ser-240 by CaMK2. Phosphorylated by MAPK3 upon EGF stimulation; which increases transcriptional activity and stability, and is blocked by calmodulin. Phosphorylated by PDPK1. In terms of processing, in response to TGF-beta, ubiquitinated by NEDD4L; which promotes its degradation. Monoubiquitinated, leading to prevent DNA-binding. Deubiquitination by USP15 alleviates inhibition and promotes activation of TGF-beta target genes. Ubiquitinated by RNF111, leading to its degradation: only SMAD2 proteins that are 'in use' are targeted by RNF111, RNF111 playing a key role in activating SMAD2 and regulating its turnover. Acetylated on Lys-19 by coactivators in response to TGF-beta signaling, which increases transcriptional activity.

The protein resides in the cytoplasm. Its subcellular location is the nucleus. In terms of biological role, receptor-regulated SMAD (R-SMAD) that is an intracellular signal transducer and transcriptional modulator activated by TGF-beta (transforming growth factor) and activin type 1 receptor kinases. Binds the TRE element in the promoter region of many genes that are regulated by TGF-beta and, on formation of the SMAD2/SMAD4 complex, activates transcription. Promotes TGFB1-mediated transcription of odontoblastic differentiation genes in dental papilla cells. Positively regulates PDPK1 kinase activity by stimulating its dissociation from the 14-3-3 protein YWHAQ which acts as a negative regulator. This chain is Mothers against decapentaplegic homolog 2 (Smad2), found in Mus musculus (Mouse).